The following is a 76-amino-acid chain: MIGDLLLFGTLLVNAGAVLNFKLKKKESQGFGDDLMTEATTGDNIREFLLSLRYFRIFIALWNIFMMFCMIVLFGS.

The first 17 residues, 1–17 (MIGDLLLFGTLLVNAGA), serve as a signal peptide directing secretion. The Extracellular segment spans residues 18–54 (VLNFKLKKKESQGFGDDLMTEATTGDNIREFLLSLRY). A helical membrane pass occupies residues 55 to 75 (FRIFIALWNIFMMFCMIVLFG). Ser76 is a topological domain (cytoplasmic).

The protein belongs to the SMIM7 family.

The protein resides in the membrane. The sequence is that of Small integral membrane protein 7 (smim7) from Xenopus tropicalis (Western clawed frog).